The primary structure comprises 215 residues: Cytochrome c biogenesis ATP-binding export protein CcmA (215 aa).

The 209-residue stretch at 3 to 211 (LTAEILAARR…KMTGFAGVDN (209 aa)) folds into the ABC transporter domain. ATP is bound at residue 35-42 (GKNGSGKS).

The protein belongs to the ABC transporter superfamily. CcmA exporter (TC 3.A.1.107) family. The complex is composed of two ATP-binding proteins (CcmA) and two transmembrane proteins (CcmB).

Its subcellular location is the cell inner membrane. The enzyme catalyses heme b(in) + ATP + H2O = heme b(out) + ADP + phosphate + H(+). In terms of biological role, part of the ABC transporter complex CcmAB involved in the biogenesis of c-type cytochromes; once thought to export heme, this seems not to be the case, but its exact role is uncertain. Responsible for energy coupling to the transport system. This Rhizobium johnstonii (strain DSM 114642 / LMG 32736 / 3841) (Rhizobium leguminosarum bv. viciae) protein is Cytochrome c biogenesis ATP-binding export protein CcmA.